The primary structure comprises 870 residues: Ribonucleoside-diphosphate reductase large subunit (870 aa).

The 95-residue stretch at Met-16 to Lys-110 folds into the ATP-cone domain. Residues Lys-20 to Arg-21, Glu-26 to Lys-32, Thr-71, and Asp-75 each bind ATP. Ser-235 serves as a coordination point for GDP. Cysteines 236 and 463 form a disulfide. DTTP is bound by residues Asp-244 to Ile-246, Lys-261, Arg-274, and Arg-281 to Gly-282. Asn-446 is a binding site for GDP. Catalysis depends on Asn-446, which acts as the Proton acceptor. Residue Cys-448 is the Cysteine radical intermediate of the active site. GDP is bound by residues Glu-450 and Thr-632 to Thr-635. The active-site Proton acceptor is the Glu-450. The tract at residues Lys-789–Tyr-854 is disordered. Low complexity predominate over residues Asn-796–Ser-811. Residues Asn-812–Thr-831 are compositionally biased toward polar residues. Residues Gln-832–Gln-844 show a composition bias toward low complexity.

It belongs to the ribonucleoside diphosphate reductase large chain family. Heterodimer of a large and a small subunit.

The protein resides in the cytoplasm. The enzyme catalyses a 2'-deoxyribonucleoside 5'-diphosphate + [thioredoxin]-disulfide + H2O = a ribonucleoside 5'-diphosphate + [thioredoxin]-dithiol. Its activity is regulated as follows. Under complex allosteric control mediated by deoxynucleoside triphosphates and ATP binding to separate specificity and activation sites on the large subunit. The type of nucleotide bound at the specificity site determines substrate preference. It seems probable that ATP makes the enzyme reduce CDP and UDP, dGTP favors ADP reduction and dTTP favors GDP reduction. Stimulated by ATP and inhibited by dATP binding to the activity site. Functionally, provides the precursors necessary for DNA synthesis. Catalyzes the biosynthesis of deoxyribonucleotides from the corresponding ribonucleotides. The protein is Ribonucleoside-diphosphate reductase large subunit (rnrA) of Dictyostelium discoideum (Social amoeba).